The sequence spans 104 residues: Putative pterin-4-alpha-carbinolamine dehydratase (104 aa).

This sequence belongs to the pterin-4-alpha-carbinolamine dehydratase family.

It carries out the reaction (4aS,6R)-4a-hydroxy-L-erythro-5,6,7,8-tetrahydrobiopterin = (6R)-L-erythro-6,7-dihydrobiopterin + H2O. This chain is Putative pterin-4-alpha-carbinolamine dehydratase (pcbD), found in Rhizobium meliloti (strain 1021) (Ensifer meliloti).